The sequence spans 528 residues: DEAD-box ATP-dependent RNA helicase CshA (528 aa).

The short motif at Thr-2–Ala-30 is the Q motif element. The region spanning Ile-33–Ile-203 is the Helicase ATP-binding domain. Position 46 to 53 (Ala-46 to Thr-53) interacts with ATP. Residues Asp-151–Asp-154 carry the DEAD box motif. Residues Asn-214 to Ala-374 form the Helicase C-terminal domain. The disordered stretch occupies residues Thr-428–Ala-528. The segment covering Asp-458–Gly-506 has biased composition (basic and acidic residues). Over residues Glu-518–Ala-528 the composition is skewed to basic residues.

The protein belongs to the DEAD box helicase family. CshA subfamily. In terms of assembly, oligomerizes, may be a member of the RNA degradosome.

The protein localises to the cytoplasm. It catalyses the reaction ATP + H2O = ADP + phosphate + H(+). Its function is as follows. DEAD-box RNA helicase possibly involved in RNA degradation. Unwinds dsRNA in both 5'- and 3'-directions, has RNA-dependent ATPase activity. The polypeptide is DEAD-box ATP-dependent RNA helicase CshA (Bacillus thuringiensis (strain Al Hakam)).